The sequence spans 72 residues: Disintegrin crotatroxin (72 aa).

Positions 1–72 (AGEECDCGSP…ADCPRNGLYG (72 aa)) constitute a Disintegrin domain. Disulfide bonds link cysteine 5–cysteine 20, cysteine 7–cysteine 15, cysteine 14–cysteine 37, cysteine 28–cysteine 34, cysteine 33–cysteine 58, and cysteine 46–cysteine 65. The short motif at 50 to 52 (RGD) is the Cell attachment site element.

The protein belongs to the venom metalloproteinase (M12B) family. P-II subfamily. P-IIa sub-subfamily. As to quaternary structure, monomer. Expressed by the venom gland.

Its subcellular location is the secreted. Functionally, inhibits fibrinogen interaction with platelets. Acts by binding to the alpha-IIb/beta-3 (ITGA2B/ITGB3) on the platelet surface and inhibits aggregation induced by ADP, thrombin, platelet-activating factor and collagen. In terms of biological role, inhibits ADP-induced platelet aggregation (IC(50) = 17.5nM), cancer cell migration in vitro, and experimental lung tumor colonization of cancer cells. In Crotalus atrox (Western diamondback rattlesnake), this protein is Disintegrin crotatroxin.